The following is a 615-amino-acid chain: Nuclear receptor subfamily 1 group D member 1 (615 aa).

A compositionally biased stretch (polar residues) spans 1 to 12; that stretch reads MTTLDSNNNTGG. The segment at 1 to 70 is required for phosphorylation by CSNK1E and cytoplasmic localization; the sequence is MTTLDSNNNT…TQDPARSFGT (70 aa). The disordered stretch occupies residues 1-120; that stretch reads MTTLDSNNNT…SSRVSPSKGT (120 aa). A modulating region spans residues 1–129; sequence MTTLDSNNNT…TSNITKLNGM (129 aa). Residues 14-34 show a composition bias toward low complexity; sequence ITYIGSSGSSPSRTSPESLYS. Positions 35 to 48 are enriched in polar residues; it reads DSSNGSFQSLTQGC. The crucial for activation of GJA1 stretch occupies residues 49–285; the sequence is PTYFPPSPTG…PPRSPSPEPT (237 aa). A phosphoserine; by GSK3-beta mark is found at Ser55 and Ser59. A compositionally biased stretch (low complexity) spans 72–103; it reads PPSLSDDSSPSSASSSSSSSSSSFYNGSPPGS. Residues 130 to 206 constitute a DNA-binding region (nuclear receptor); the sequence is VLLCKVCGDV…VGMSRDAVRF (77 aa). 2 NR C4-type zinc fingers span residues 133–153 and 170–194; these read CKVCGDVASGFHYGVHACEGC and CLKNENCSIVRINRNRCQQCRFKKC. N6-acetyllysine; by KAT5 is present on residues Lys192 and Lys193. 3 disordered regions span residues 235–287, 312–337, and 357–385; these read LCPL…PTVE, PGNFNANHASGSPPATTPQCWESQGC, and NGLRQGPSSYPPTWPSGPAHHSCHQPNSN. Residues 253–262 show a composition bias toward pro residues; sequence PSPPPAPAPT. Thr275 bears the Phosphothreonine; by CDK1 mark. Residues 285-615 form the NR LBD domain; it reads TVEDVISQVA…KLLSFRVDAQ (331 aa). N6-acetyllysine is present on Lys401. Cys419 provides a ligand contact to heme. Lys592 is subject to N6-acetyllysine. His603 provides a ligand contact to heme.

Belongs to the nuclear hormone receptor family. NR1 subfamily. In terms of assembly, binds DNA as a monomer or a homodimer. Interacts with C1D, NR2E3, SP1 and ZNHIT1. Interacts with OPHN1 (via C-terminus). Interacts with PER2; the interaction associates PER2 to BMAL1 promoter region. Interacts with CRY1. Interacts with CCAR2. Interacts with SIAH2. Interacts with FBXW7 and CDK1. Interacts with HUWE1. Interacts with NR0B2. Interacts with NFIL3. Interacts (via domain NR LBD) with HSP90AA1 and HSP90AB1. Post-translationally, ubiquitinated, leading to its proteasomal degradation. Ubiquitinated by the SCF(FBXW7) complex when phosphorylated by CDK1 leading to its proteasomal degradation. Ubiquitinated by SIAH2; leading to its proteasomal degradation. Rapidly ubiquitinated in response to inflammatory triggers and sumoylation is a prerequisite to its ubiquitination. In terms of processing, sumoylated by UBE2I, desumoylated by SENP1, and sumoylation is a prerequisite to its ubiquitination. Phosphorylated by CSNK1E; phosphorylation enhances its cytoplasmic localization. Post-translationally, undergoes lysosome-mediated degradation in a time-dependent manner in the liver.

Its subcellular location is the nucleus. The protein localises to the cytoplasm. It localises to the cell projection. It is found in the dendrite. The protein resides in the dendritic spine. Functionally, transcriptional repressor which coordinates circadian rhythm and metabolic pathways in a heme-dependent manner. Integral component of the complex transcription machinery that governs circadian rhythmicity and forms a critical negative limb of the circadian clock by directly repressing the expression of core clock components BMAL1, CLOCK and CRY1. Also regulates genes involved in metabolic functions, including lipid and bile acid metabolism, adipogenesis, gluconeogenesis and the macrophage inflammatory response. Acts as a receptor for heme which stimulates its interaction with the NCOR1/HDAC3 corepressor complex, enhancing transcriptional repression. Recognizes two classes of DNA response elements within the promoter of its target genes and can bind to DNA as either monomers or homodimers, depending on the nature of the response element. Binds as a monomer to a response element composed of the consensus half-site motif 5'-[A/G]GGTCA-3' preceded by an A/T-rich 5' sequence (RevRE), or as a homodimer to a direct repeat of the core motif spaced by two nucleotides (RevDR-2). Acts as a potent competitive repressor of ROR alpha (RORA) function and regulates the levels of its ligand heme by repressing the expression of PPARGC1A, a potent inducer of heme synthesis. Regulates lipid metabolism by repressing the expression of APOC3 and by influencing the activity of sterol response element binding proteins (SREBPs); represses INSIG2 which interferes with the proteolytic activation of SREBPs which in turn govern the rhythmic expression of enzymes with key functions in sterol and fatty acid synthesis. Regulates gluconeogenesis via repression of G6PC1 and PEPCK and adipocyte differentiation via repression of PPARG. Regulates glucagon release in pancreatic alpha-cells via the AMPK-NAMPT-SIRT1 pathway and the proliferation, glucose-induced insulin secretion and expression of key lipogenic genes in pancreatic-beta cells. Positively regulates bile acid synthesis by increasing hepatic expression of CYP7A1 via repression of NR0B2 and NFIL3 which are negative regulators of CYP7A1. Modulates skeletal muscle oxidative capacity by regulating mitochondrial biogenesis and autophagy; controls mitochondrial biogenesis and respiration by interfering with the STK11-PRKAA1/2-SIRT1-PPARGC1A signaling pathway. Represses the expression of SERPINE1/PAI1, an important modulator of cardiovascular disease and the expression of inflammatory cytokines and chemokines in macrophages. Represses gene expression at a distance in macrophages by inhibiting the transcription of enhancer-derived RNAs (eRNAs). Plays a role in the circadian regulation of body temperature and negatively regulates thermogenic transcriptional programs in brown adipose tissue (BAT); imposes a circadian oscillation in BAT activity, increasing body temperature when awake and depressing thermogenesis during sleep. In concert with NR2E3, regulates transcriptional networks critical for photoreceptor development and function. In addition to its activity as a repressor, can also act as a transcriptional activator. In the ovarian granulosa cells acts as a transcriptional activator of STAR which plays a role in steroid biosynthesis. In collaboration with SP1, activates GJA1 transcription in a heme-independent manner. Represses the transcription of CYP2B10, CYP4A10 and CYP4A14. Represses the transcription of CES2. Represses and regulates the circadian expression of TSHB in a NCOR1-dependent manner. Negatively regulates the protein stability of NR3C1 and influences the time-dependent subcellular distribution of NR3C1, thereby affecting its transcriptional regulatory activity. Plays a critical role in the circadian control of neutrophilic inflammation in the lung; under resting, non-stress conditions, acts as a rhythmic repressor to limit inflammatory activity whereas in the presence of inflammatory triggers undergoes ubiquitin-mediated degradation thereby relieving inhibition of the inflammatory response. Plays a key role in the circadian regulation of microglial activation and neuroinflammation; suppresses microglial activation through the NF-kappaB pathway in the central nervous system. Plays a role in the regulation of the diurnal rhythms of lipid and protein metabolism in the skeletal muscle via transcriptional repression of genes controlling lipid and amino acid metabolism in the muscle. This is Nuclear receptor subfamily 1 group D member 1 (Nr1d1) from Rattus norvegicus (Rat).